The primary structure comprises 157 residues: Small ribosomal subunit protein uS7 (157 aa).

It belongs to the universal ribosomal protein uS7 family. Part of the 30S ribosomal subunit. Contacts proteins S9 and S11.

In terms of biological role, one of the primary rRNA binding proteins, it binds directly to 16S rRNA where it nucleates assembly of the head domain of the 30S subunit. Is located at the subunit interface close to the decoding center, probably blocks exit of the E-site tRNA. This Protochlamydia amoebophila (strain UWE25) protein is Small ribosomal subunit protein uS7.